Consider the following 351-residue polypeptide: Holliday junction branch migration complex subunit RuvB (351 aa).

A disordered region spans residues 1–22 (MSDPKANRMVSPERRSDDVGDT). Residues 2 to 185 (SDPKANRMVS…FGIPVRLNFY (184 aa)) form a large ATPase domain (RuvB-L) region. ATP is bound by residues Leu-24, Arg-25, Gly-66, Lys-69, Thr-70, Thr-71, 132–134 (EDF), Arg-175, Tyr-185, and Arg-222. Thr-70 is a binding site for Mg(2+). A small ATPAse domain (RuvB-S) region spans residues 186–256 (TIEELESIVS…IADHALSALE (71 aa)). A head domain (RuvB-H) region spans residues 259 to 351 (AAGLDAMDRR…GLFGTDESDD (93 aa)). Arg-295, Arg-314, and Arg-319 together coordinate DNA.

It belongs to the RuvB family. In terms of assembly, homohexamer. Forms an RuvA(8)-RuvB(12)-Holliday junction (HJ) complex. HJ DNA is sandwiched between 2 RuvA tetramers; dsDNA enters through RuvA and exits via RuvB. An RuvB hexamer assembles on each DNA strand where it exits the tetramer. Each RuvB hexamer is contacted by two RuvA subunits (via domain III) on 2 adjacent RuvB subunits; this complex drives branch migration. In the full resolvosome a probable DNA-RuvA(4)-RuvB(12)-RuvC(2) complex forms which resolves the HJ.

Its subcellular location is the cytoplasm. It catalyses the reaction ATP + H2O = ADP + phosphate + H(+). In terms of biological role, the RuvA-RuvB-RuvC complex processes Holliday junction (HJ) DNA during genetic recombination and DNA repair, while the RuvA-RuvB complex plays an important role in the rescue of blocked DNA replication forks via replication fork reversal (RFR). RuvA specifically binds to HJ cruciform DNA, conferring on it an open structure. The RuvB hexamer acts as an ATP-dependent pump, pulling dsDNA into and through the RuvAB complex. RuvB forms 2 homohexamers on either side of HJ DNA bound by 1 or 2 RuvA tetramers; 4 subunits per hexamer contact DNA at a time. Coordinated motions by a converter formed by DNA-disengaged RuvB subunits stimulates ATP hydrolysis and nucleotide exchange. Immobilization of the converter enables RuvB to convert the ATP-contained energy into a lever motion, pulling 2 nucleotides of DNA out of the RuvA tetramer per ATP hydrolyzed, thus driving DNA branch migration. The RuvB motors rotate together with the DNA substrate, which together with the progressing nucleotide cycle form the mechanistic basis for DNA recombination by continuous HJ branch migration. Branch migration allows RuvC to scan DNA until it finds its consensus sequence, where it cleaves and resolves cruciform DNA. This Bradyrhizobium diazoefficiens (strain JCM 10833 / BCRC 13528 / IAM 13628 / NBRC 14792 / USDA 110) protein is Holliday junction branch migration complex subunit RuvB.